A 287-amino-acid polypeptide reads, in one-letter code: MLARFPLYLRLVRMDKPIGSLLLLWPTLNALWIASDGHPRWPLLVIFSLGTLLMRSAGCAMNDYADRDFDRHVKRTADRPLTSGKIRAWEAIAIAVGLAFVSFLLILPLNTLTKQLSVVALFVAGSYPFMKRFFAIPQAYLGIAFGFGIPMAFAAVQDTVPTIAWVMLIANIFWSVAYDTEYAMVDRDDDIKIGIRTSALTFGRFDVAAVMLCYAVTLGIYVWIGVTLGFGLAYWAGWAAAVGCALYHYTLIKDRERMPCFAAFRHNNWLGGVLFAGIAAHYLLAGS.

The next 6 membrane-spanning stretches (helical) occupy residues 41–61, 89–109, 133–153, 158–178, 202–224, and 267–287; these read WPLL…GCAM, WEAI…ILPL, FFAI…PMAF, DTVP…SVAY, FGRF…YVWI, and NNWL…LAGS.

The protein belongs to the UbiA prenyltransferase family. It depends on Mg(2+) as a cofactor.

It localises to the cell inner membrane. The enzyme catalyses all-trans-octaprenyl diphosphate + 4-hydroxybenzoate = 4-hydroxy-3-(all-trans-octaprenyl)benzoate + diphosphate. It participates in cofactor biosynthesis; ubiquinone biosynthesis. Its function is as follows. Catalyzes the prenylation of para-hydroxybenzoate (PHB) with an all-trans polyprenyl group. Mediates the second step in the final reaction sequence of ubiquinone-8 (UQ-8) biosynthesis, which is the condensation of the polyisoprenoid side chain with PHB, generating the first membrane-bound Q intermediate 3-octaprenyl-4-hydroxybenzoate. The chain is 4-hydroxybenzoate octaprenyltransferase from Burkholderia lata (strain ATCC 17760 / DSM 23089 / LMG 22485 / NCIMB 9086 / R18194 / 383).